The sequence spans 224 residues: MKYTLTRIDPDAPVERYPQEQSQTVDDPLAQDATRGIMMGRLEEVLQDTVNWGRKNSLWPYNFGISCCYVEMCTAFTSPHDVARFGAEVIRASPRQADFMVIAGTPFIKMAPVIQRLYEQLLEPKWVISMGACANSGGMYDIYSVVQGVDKFLPVDVYIPGCPPRPEAFLQALMLLQDSIGKERRPLSWVVGDQGIYRPDMPAEKDRKRGERIKVTNLRTPDEI.

[4Fe-4S] cluster-binding residues include Cys67, Cys68, Cys133, and Cys162. The interval 200–224 (DMPAEKDRKRGERIKVTNLRTPDEI) is disordered. Residues 201–224 (MPAEKDRKRGERIKVTNLRTPDEI) are compositionally biased toward basic and acidic residues.

It belongs to the complex I 20 kDa subunit family. As to quaternary structure, NDH-1 is composed of 14 different subunits. Subunits NuoB, C, D, E, F, and G constitute the peripheral sector of the complex. Requires [4Fe-4S] cluster as cofactor.

It is found in the cell inner membrane. It carries out the reaction a quinone + NADH + 5 H(+)(in) = a quinol + NAD(+) + 4 H(+)(out). Functionally, NDH-1 shuttles electrons from NADH, via FMN and iron-sulfur (Fe-S) centers, to quinones in the respiratory chain. The immediate electron acceptor for the enzyme in this species is believed to be ubiquinone. Couples the redox reaction to proton translocation (for every two electrons transferred, four hydrogen ions are translocated across the cytoplasmic membrane), and thus conserves the redox energy in a proton gradient. In Aeromonas salmonicida (strain A449), this protein is NADH-quinone oxidoreductase subunit B.